We begin with the raw amino-acid sequence, 138 residues long: Large ribosomal subunit protein uL16 (138 aa).

It belongs to the universal ribosomal protein uL16 family. Part of the 50S ribosomal subunit.

In terms of biological role, binds 23S rRNA and is also seen to make contacts with the A and possibly P site tRNAs. The protein is Large ribosomal subunit protein uL16 of Syntrophobacter fumaroxidans (strain DSM 10017 / MPOB).